We begin with the raw amino-acid sequence, 532 residues long: UDP-glucuronosyltransferase 1A4 (532 aa).

The N-terminal stretch at 1–27 (MVLGVWITLWRLVRLLLLLCVLPWAEG) is a signal peptide. N-linked (GlcNAc...) asparagine glycans are attached at residues asparagine 141 and asparagine 295. The chain crosses the membrane as a helical span at residues 490–506 (VIGFLLAIVLTVAFVTF).

Belongs to the UDP-glycosyltransferase family. As to quaternary structure, homodimers. Homooligomer. Interacts with UGT1A1, UGT1A3, UGT1A6, UGT1A7, UGT1A8, UGT1A9 and UGT1A10 to form heterodimers.

It is found in the endoplasmic reticulum membrane. It catalyses the reaction glucuronate acceptor + UDP-alpha-D-glucuronate = acceptor beta-D-glucuronoside + UDP + H(+). The enzyme catalyses calcidiol + UDP-alpha-D-glucuronate = calcidiol 25-O-(beta-D-glucuronide) + UDP + H(+). It carries out the reaction calcidiol + UDP-alpha-D-glucuronate = calcidiol 3-O-(beta-D-glucuronide) + UDP + H(+). The catalysed reaction is calcitriol + UDP-alpha-D-glucuronate = calcitriol 25-O-(beta-D-glucuronide) + UDP + H(+). It catalyses the reaction (5Z,8Z,11Z,14Z)-eicosatetraenoate + UDP-alpha-D-glucuronate = O-[(5Z),(8Z),(11Z),(14Z)-eicosatetraenoyl]-beta-D-glucuronate + UDP. The enzyme catalyses 15-hydroxy-(5Z,8Z,11Z,13E)-eicosatetraenoate + UDP-alpha-D-glucuronate = 15-O-(beta-D-glucuronosyl)-(5Z,8Z,11Z,14Z)-eicosatetraenoate + UDP + H(+). It carries out the reaction 20-hydroxy-(5Z,8Z,11Z,14Z)-eicosatetraenoate + UDP-alpha-D-glucuronate = 20-O-(beta-D-glucuronosyl)-(5Z,8Z,11Z,14Z)-eicosatetraenoate + UDP + H(+). UDP-glucuronosyltransferase (UGT) that catalyzes phase II biotransformation reactions in which lipophilic substrates are conjugated with glucuronic acid to increase the metabolite's water solubility, thereby facilitating excretion into either the urine or bile. Essential for the elimination and detoxification of drugs, xenobiotics and endogenous compounds. Involved in the glucuronidation of calcidiol, which is the major circulating form of vitamin D3 essential for the regulation of calcium and phosphate homeostasis. Also glucuronidates the biologically active form of vitamin D3, calcitriol, probably leading to its biliary transport and intestinal reabsorption. Involved in the glucuronidation of arachidonic acid (AA) and AA-derived eicosanoids including 15-HETE, 20-HETE and PGB1. In Oryctolagus cuniculus (Rabbit), this protein is UDP-glucuronosyltransferase 1A4 (Ugt1a4).